A 309-amino-acid chain; its full sequence is Probable 3-hydroxyacyl-CoA dehydrogenase B0272.3 (309 aa).

Belongs to the 3-hydroxyacyl-CoA dehydrogenase family. In terms of assembly, homodimer.

The protein resides in the mitochondrion matrix. It catalyses the reaction a (3S)-3-hydroxyacyl-CoA + NAD(+) = a 3-oxoacyl-CoA + NADH + H(+). Its pathway is lipid metabolism; fatty acid beta-oxidation. In Caenorhabditis elegans, this protein is Probable 3-hydroxyacyl-CoA dehydrogenase B0272.3.